Consider the following 388-residue polypeptide: uncharacterized protein (388 aa).

[4Fe-4S] cluster-binding residues include cysteine 18, cysteine 24, cysteine 27, and cysteine 99. 3 residues coordinate S-adenosyl-L-methionine: glutamine 212, glutamate 262, and asparagine 313. The Nucleophile role is filled by cysteine 343.

The protein belongs to the class I-like SAM-binding methyltransferase superfamily. RNA M5U methyltransferase family.

This is an uncharacterized protein from Bdellovibrio bacteriovorus (strain ATCC 15356 / DSM 50701 / NCIMB 9529 / HD100).